A 953-amino-acid polypeptide reads, in one-letter code: MKSRSLKLREAHKVGGSAAFCSILWDHKAEHFVTSSSSDPSISVHDGLSTSTLPPTILRHHQDGVTSLALSNDSTLLASGSIDHCVKLYKFPSGEFQTNITRFTLPIRVLAFNGSGSLLAAAGDDEGIKLINTFDGSIVRVLKGHKGPVTGLDFHPNGELLASIDTTGTVLCWELQNGVVSFTLKGVAPDTGFNTSIVNIPRWSPDGRTLAVPGLRNDVVMYDRFTGEKLFALRGDHLEAICYLTWAPNGKYIATSGLDKQVLLWDVDKKQDIDRHKFEERICCMSWKPNGNALSVIDAKGRYGVWESLVPSSMLSPTVGVPDIVPKKRNEILDFDDEVEEEIYRASESLDDAMGDSDDGESHHTSRKRLRKKTLIDEDVDDAYEELNDGSSLPSASEYRKKSHRGHREKQGARSGAFKGISASTKYKMQSSFQPGATPPEPGKRTFLCYNMLGCITTIEHEGNSRIETDFHDTGRGPRVSSMIDIYGFTMASINETGCVFANPCKGEKNMSVLMYRPFRSWASNSEWTMRFEGEEVKVVANGSGWVAAVTSLNLLRVFSEGGLQKHILSLDGPVVTAVGCKDHLAVVTHVSDCLPSNEQVMEFRVFNISKMTQELKGRVALTPGSRLTWIGFSEEGSLSSYDSEGVLRVFTSQYGGSWIPVFSTSKEKKQEENYWVVGLNTSSLYCIACKYAEMFPQVTPKPILTILDLSLPLASSDLGAASLENELILKQLRLYETQRKVDDMALVGVDTTALEDEAFDLEVSQDKCILRLISSCCSSDSFARASELMELLTLEKSMRAAITLVTKLKLPFLAEKFSSILEERLLEEASEAAVTNPALNPNGEVVTRVESKVQNPPASIQTSENTEAVMKSSATKLSAPTLLKKSKVSEGLKLGKEQTKKDKSDDAKIKEIKKLNLKNPVNNVNKEDKGQEKEVNQGEARRSSNPFLKSTV.

WD repeat units lie at residues 15 to 55, 60 to 99, 102 to 143, 144 to 183, 192 to 232, 236 to 275, and 277 to 316; these read GGSA…TLPP, HHQD…FQTN, RFTL…RVLK, GHKG…VSFT, GFNT…KLFA, DHLE…DIDR, and KFEE…SMLS. Disordered stretches follow at residues 347-370, 385-419, and 851-877; these read SESL…RKRL, EELN…GAFK, and ESKV…SATK. The segment covering 349 to 359 has biased composition (acidic residues); it reads SLDDAMGDSDD. The segment covering 853-877 has biased composition (polar residues); it reads KVQNPPASIQTSENTEAVMKSSATK. Residues 900–907 carry the Nuclear localization signal motif; sequence TKKDKSDD. Positions 919–953 are disordered; it reads KNPVNNVNKEDKGQEKEVNQGEARRSSNPFLKSTV. A compositionally biased stretch (basic and acidic residues) spans 926 to 943; the sequence is NKEDKGQEKEVNQGEARR. Polar residues predominate over residues 944–953; that stretch reads SSNPFLKSTV.

In terms of assembly, interacts with EZA1/SWN, LHP1, SLD5 and CLF in the nucleus. Expressed in root meristematic zones, initiating lateral roots, young leaves and the shoot apex.

The protein localises to the nucleus. Its function is as follows. Participates in maintaining the H3K27me3 mark at target genes by interacting with LHP1-PRC2 complexes during replication, thus contributing to H3K27me3 inheritance. The chain is Protein ENHANCER OF LHP1 1 from Arabidopsis thaliana (Mouse-ear cress).